Reading from the N-terminus, the 296-residue chain is Large ribosomal subunit protein uL29m (296 aa).

A mitochondrion-targeting transit peptide spans Met-1–Thr-19.

Belongs to the universal ribosomal protein uL29 family. In terms of assembly, component of the mitochondrial large ribosomal subunit. Mature mitochondrial ribosomes consist of a small (37S) and a large (54S) subunit. The 37S subunit contains at least 33 different proteins and 1 molecule of RNA (15S). The 54S subunit contains at least 45 different proteins and 1 molecule of RNA (21S).

It is found in the mitochondrion. This chain is Large ribosomal subunit protein uL29m (MRPL4), found in Lodderomyces elongisporus (strain ATCC 11503 / CBS 2605 / JCM 1781 / NBRC 1676 / NRRL YB-4239) (Yeast).